We begin with the raw amino-acid sequence, 882 residues long: E3 ubiquitin-protein ligase SH3RF3 (882 aa).

A disordered region spans residues 18-42 (AQSEGDEDRPGERRRRRAAATAAGA). Residues 57–98 (CSVCLERLDTTAKVLPCQHTFCRRCLESIVCSRHELRCPECR) form an RING-type zinc finger. The interval 124–159 (RPRAGTSPGGSPPARPIPGQSAAPTLAGGGGGAAGS) is disordered. SH3 domains are found at residues 194–253 (CLLP…CIQP) and 256–319 (HAPP…LNDS). The segment at 368-399 (RRVDGKKNTKKRHSFTALSVTHRSSQAASHRH) is disordered. Residues 369-439 (RVDGKKNTKK…APTQDVSSSA (71 aa)) form an interaction with RAC1 region. A Phosphoserine modification is found at Ser400. The segment covering 433–444 (QDVSSSAGSTPT) has biased composition (polar residues). The tract at residues 433 to 458 (QDVSSSAGSTPTAVPRAASVSGEQGT) is disordered. The SH3 3 domain occupies 464 to 525 (LPLNVYLALY…PGNYVTPVSR (62 aa)). 3 stretches are compositionally biased toward polar residues: residues 575–588 (PQAH…SPPT), 596–635 (AQPT…NSPS), and 697–706 (LSTSSPTNTG). Disordered regions lie at residues 575 to 664 (PQAH…CPRP) and 693 to 747 (PIGV…PTHD). A compositionally biased stretch (basic and acidic residues) spans 708–721 (KLDEKKSEKKEKKS). Residue Ser797 is modified to Phosphoserine. The region spanning 823–882 (LPRERYRVVVSYPPQSEAEIELKEGDIVFVHKKREDGWYKGTLQRNGRTGLFPGSFVESF) is the SH3 4 domain.

Belongs to the SH3RF family. In terms of assembly, interacts (via SH3 domain 3) with PAK2. Interacts with RAC1 (GTP-bound form). In terms of processing, autoubiquitinated.

The enzyme catalyses S-ubiquitinyl-[E2 ubiquitin-conjugating enzyme]-L-cysteine + [acceptor protein]-L-lysine = [E2 ubiquitin-conjugating enzyme]-L-cysteine + N(6)-ubiquitinyl-[acceptor protein]-L-lysine.. It participates in protein modification; protein ubiquitination. In terms of biological role, has E3 ubiquitin-protein ligase activity. The chain is E3 ubiquitin-protein ligase SH3RF3 (SH3RF3) from Homo sapiens (Human).